Reading from the N-terminus, the 194-residue chain is Isopentenyl-diphosphate Delta-isomerase (194 aa).

2 residues coordinate Mn(2+): His23 and His30. Residues 28–162 form the Nudix hydrolase domain; it reads PLHLAFSCYV…TTDISPWCRQ (135 aa). The active site involves Cys65. His67 serves as a coordination point for Mn(2+). Mg(2+) is bound at residue Glu85. Mn(2+)-binding residues include Glu112 and Glu114. Glu114 is an active-site residue.

Belongs to the IPP isomerase type 1 family. Mg(2+) serves as cofactor. Requires Mn(2+) as cofactor.

It is found in the cytoplasm. It catalyses the reaction isopentenyl diphosphate = dimethylallyl diphosphate. It participates in isoprenoid biosynthesis; dimethylallyl diphosphate biosynthesis; dimethylallyl diphosphate from isopentenyl diphosphate: step 1/1. In terms of biological role, catalyzes the 1,3-allylic rearrangement of the homoallylic substrate isopentenyl (IPP) to its highly electrophilic allylic isomer, dimethylallyl diphosphate (DMAPP). This is Isopentenyl-diphosphate Delta-isomerase from Saccharopolyspora erythraea (strain ATCC 11635 / DSM 40517 / JCM 4748 / NBRC 13426 / NCIMB 8594 / NRRL 2338).